Consider the following 808-residue polypeptide: LisH domain-containing protein ARMC9 (808 aa).

The LisH domain occupies 7-39 (YEADLLGLVKEFLNFGEFQETLETFTKECKTKG). The stretch at 196-230 (ITLYKESLHNNQELLQQLQQQLMETEHKARTYKKC) forms a coiled coil. Disordered regions lie at residues 576–599 (FDESIESDDEEEEKDDEEDEDALE), 650–709 (PLQR…DYCV), and 742–808 (GMEK…SYRK). A compositionally biased stretch (acidic residues) spans 579–599 (SIESDDEEEEKDDEEDEDALE). 3 stretches are compositionally biased toward polar residues: residues 655–668 (VTPSTHRVMNTVRK), 677–709 (TNTFKTSQANMSVVSSRPPTRSGSRASTSDYCV), and 775–784 (IAPQFSQSGP). Residues 785–808 (QQTSYSSSAGSSTRSRQSTQSYRK) show a composition bias toward low complexity.

The protein resides in the cytoplasm. It is found in the cytoskeleton. Its subcellular location is the cilium basal body. The protein localises to the cell projection. It localises to the cilium. The protein resides in the microtubule organizing center. It is found in the centrosome. Its subcellular location is the centriole. In terms of biological role, involved in ciliogenesis. It is required for appropriate acetylation and polyglutamylation of ciliary microtubules, and regulation of cilium length. Acts as a positive regulator of hedgehog (Hh)signaling. The sequence is that of LisH domain-containing protein ARMC9 (armc9) from Xenopus tropicalis (Western clawed frog).